The sequence spans 386 residues: Lipoyl synthase, mitochondrial (386 aa).

Residues 1-48 form a disordered region; that stretch reads MHGRRHLAASLTRALTQAPSRSISSTPSLLQTLDPSVPSPSPPPAAEP. Polar residues predominate over residues 13–34; that stretch reads RALTQAPSRSISSTPSLLQTLD. The segment covering 37–46 has biased composition (pro residues); sequence VPSPSPPPAA. The [4Fe-4S] cluster site is built by cysteine 113, cysteine 118, cysteine 124, cysteine 144, cysteine 148, cysteine 151, and serine 360. Positions 129–349 constitute a Radical SAM core domain; the sequence is ETGTATATIM…RALGVEMGFR (221 aa).

It belongs to the radical SAM superfamily. Lipoyl synthase family. [4Fe-4S] cluster is required as a cofactor.

The protein resides in the mitochondrion. The catalysed reaction is [[Fe-S] cluster scaffold protein carrying a second [4Fe-4S](2+) cluster] + N(6)-octanoyl-L-lysyl-[protein] + 2 oxidized [2Fe-2S]-[ferredoxin] + 2 S-adenosyl-L-methionine + 4 H(+) = [[Fe-S] cluster scaffold protein] + N(6)-[(R)-dihydrolipoyl]-L-lysyl-[protein] + 4 Fe(3+) + 2 hydrogen sulfide + 2 5'-deoxyadenosine + 2 L-methionine + 2 reduced [2Fe-2S]-[ferredoxin]. It participates in protein modification; protein lipoylation via endogenous pathway; protein N(6)-(lipoyl)lysine from octanoyl-[acyl-carrier-protein]: step 2/2. Catalyzes the radical-mediated insertion of two sulfur atoms into the C-6 and C-8 positions of the octanoyl moiety bound to the lipoyl domains of lipoate-dependent enzymes, thereby converting the octanoylated domains into lipoylated derivatives. This is Lipoyl synthase, mitochondrial from Sorghum bicolor (Sorghum).